An 812-amino-acid chain; its full sequence is Zn(2)-C6 fungal-type transcription factor pigI (812 aa).

Residues 42–74 are disordered; the sequence is GCLHPRSPPRDRTAMADNSNSSPPASRRREKPQ. Residues 77–105 constitute a DNA-binding region (zn(2)-C6 fungal-type); it reads CTLCRRRKLRCDRRQPCETCVRRGLSLSC.

The protein localises to the nucleus. In terms of biological role, zn(2)-C6 fungal-type transcription factor; part of the gene cluster that mediates the biosynthesis of azaphilone pigments (MonAzPs), a complex mixture of compounds with a common azaphilone skeleton very widely used as food colorants. Acts probably as a negative regulator of the azaphilone pigments (MonAzPs) gene cluster. This Monascus ruber (Mold) protein is Zn(2)-C6 fungal-type transcription factor pigI.